Reading from the N-terminus, the 334-residue chain is TPR repeat-containing protein MJ0798 (334 aa).

7 TPR repeats span residues 102-135 (WKLW…NQNT), 137-168 (LLCK…DRNN), 169-202 (YKAL…NPND), 204-235 (EALE…KPDD), 236-269 (IDLI…NPNV), 273-306 (EQIY…NLYH), and 308-333 (EIYE…YKKL).

The protein is TPR repeat-containing protein MJ0798 of Methanocaldococcus jannaschii (strain ATCC 43067 / DSM 2661 / JAL-1 / JCM 10045 / NBRC 100440) (Methanococcus jannaschii).